The following is a 5148-amino-acid chain: MECPQCGHVSSEKAPKFCSECGQKLPSAATVQGDLKNDNTLVVSSTPEGKTEQGAVLREEEVLLSSTDPGKELEKPEESDSNASWTTQMSKKEKRRRKRQGTISSSEAPSSGLWSLDMPPSPGSHNSALPQNQAQQGGAASQPGHPLDTENMPMEDGFVHTEGSGSPLQGQAAERTDAQSNLAPSDLAEVKDLNTSKPSVDKGLPLDGGPALSAFKGHPKMTDASQKAPLPESKGETSGQEKKVPPIDAAASPVKTAGKETGEDVRKPKPSPVSPVASKHGDQEAELKGKLATPVRKSNEGGNTQPEDQRKPGEGRNFAAAVKTQQAAAPQQAAAPEPTSAFNPRDTVTVYFHAIVSRHFGFNPEEHKVYVRGGEGLGQKGWTDACEMYCTQDLHDLGSLVEGKMDIPRQSLDKPIPYKYVIHRGGSSKDTVEYEFIYEQAQKKGEHVNRCLRVVSTSLGNGDWHQYDDIICMRSTGFFQQAKNRILDSTRKELLKGKKQAAVVMLDRIFSVLQPWSDINLQSFMTQFLQFYSVVREPMIHDGRARKWTSLQYEEKEVWTNLWEHVKKQMAPFLEGKSGESLPADCPVRSKLTLGLSILFMVEAAEFTVPKKDLDSLCYLLIPSAGSPEALHSDLSPVLRIRQRWRIYLTNLCLRCIDERCDRWLGILPLLHTCMQKSPPKKNSKSQPEDTWAGLEGISFSEFRDKAPTRSQPLQFMQSKMALLRVDEYLFRSWLSVVPLESLSSYLENSIDYLSDVPVRVLDCLQGISYRLPGLRKISNQNMKKDVENVFKMLMHLVDIYQHRIFGENLLQIYLTECLTLHETVCNITANHQFFEIPALSAELICKLLELSPPGHTDEGLPEKSYEDLVTSTLQEALATTRNWLRSLFKSRMLSISSAYVRLTYSEEMAVWRRLVEIGFPEKHGWKGSLLGDMEGRLKQEPPRLQISFFCSSQCRDGGLHDSVSRSFEKCVIEAVSSACQSQTSVLEGLSCQDLQKFGTLLSAVITKSWPVHNGEPVFDVDEIFKYLLKWPDVRQLFELCGTNEKIIDNITEEGRQLMATAESVFQKVAGELENGTIVVGQLELILEHQSQFLDIWNLNRRRLPSQEKACDVRSLLKRRRDDLLFLKQEKRYVESLLRQLGRVKHLVQVDFGNIEIIHSQDLSNKKLNEAVIKLPNSSSYKRETHYCLSPDIREMASKLDSLKDSHIFQDFWQETAESLNTLDKDPRELKVSLPEVLEYLYNPCYDNFYTLYENLKSGKITFAEVDAIFKDFVDKYDELKNDLKFMCTMNPQDQKGWISERVGQIKEYHTLHQAVSSAKVILQVRRALGVTGDFSVLNPLLNFADSFEDFGNEKLDQISPQFIKAKQLLQDISEPRQRCLEELARQTELVAWLHKALEDINELKVFVDLASISAGENDIDVDRVACFHDAVQGYASLLYKMDERTNFSDFMNHLQELWRALDNDQHLPDKLKDSARNLEWLKTVKESHGSVELSSLSLATAINSRGVYVIEAPKDGQKISPDTVLRLLLPDGHGYPEALRTYSTEELKELLNKLMLMSGKKDHNSNTEVEKFSEVFSNMQRLVHVFIKLHCAGNMLFRTWTAKVYCCPDGGIFMNFGLELLSQLTEKGDVIQLLGALCRQMEDFLDNWKTVVAQKRAEHFYLNFYTAEQLVYLSSELRKPRPSEAALMMLSFIKGKCTVQDLVQATSACESKADRYCLREVMKKLPQQLLSEPSLMGKLQVIMMQSLVYMSAFLPHCLDLDALGRCLAHLATMGGTPVERPLPKGLQAGQPNLILCGHSEVLPAALAIYMQAPRQPLPTFDEVLLCTPATTIEEVELLLRRCLTSGSQGHKVYSLLFADQLSYEVGCQAEEFFQSLCTRAHREDYQLVILCDAAREHCYIPSTFSQYKVPLVPQAPLPNIQAYLQSHYQVPKRLLSAATVFRDGLCVGIVTSERAGVGKSLYVNTLHTKLKAKLRDETVPLKIIRLTEPHLDENQVLSALLPFLKEKYQKMPVIFHIDISTSVQTGIPIFLFKLLILQYLMDINGKIWRRSPGHLYLVEIPQGLSVQPKRSSKLNARAPLFKFLDLFPKVTCRPPKEVIDMELTPERSHTDPAMDPVEFCSEAFQRPYQYLKRFHQQQNLDTFQYEKGSVEGSPEECLQHFLIYCGLINPSWSELRNFAWFLNCQLKDCEASIFCKSAFTGDTLRGFKNFVVTFMILMARDFATPTLHTSDQSPGRQSVTIGEVVEEDLAPFSLRKRWESEPHPYVFFNGDHMTMTFIGFHLETNNNGYVDAINPSNGKVIKKDVMTKELFDGLRLQRVPFNIDFDNLPRYEKLERLCLALGIEWPIDPDETYELTTDNMLKILAIEMRFRCGIPVIIMGETGCGKTRLIKFLSDLKRGSVEAETMKLVKVHGGTTPSMIYSKVKEAERTAFSNKAQHKLDTILFFDEANTTEAVSCIKEILCDRTVDGEHLHEDSGLHIIAACNPYRKHSQEMILRLESAGLGYRVSAEETADRLGSIPLRQLVYRVHALPPSLIPLVWDFGQLNDSAEKLYIQQIVQRLVDSVSVNPSETCVIADVLSASQMFMRKRENECGFVSLRDVERCVKVFRWFHDHSDMLLKELDKFLHESSDSTHTFERDPVLWSLVMAIGVCYHASLEEKASYRTAIARCFPKPYNSSRAILDEVTHVQDLFLRGAPIRTNIARNLALKENVFMMVICIELKIPLFLVGKPGSSKSLAKIIVADAMQGQAAFSELFRCLKQVHLVSFQCSPHSTPQGIISTFKQCARFQQGKDLGQYVSVVVLDEVGLAEDSPKMPLKTLHPLLEDGCIEDDPAPYKKVGFVGISNWALDPAKMNRGIFVSRGSPNEKELIESAEGICSSDRLVQDKIRGYFAPFAKAYETVCQKQDKEFFGLRDYYSLIKMVFAKAKASKRGLSPQDITHAVLRNFSGKDNIQALSIFTASLPEARYKEEVSTVELIKQNIYPGPQASSRGLDGAESRYLLVLTRNYVALQILQQTFFEGQQPEIIFGSSFPQDQEYTQICRNINRVKICMETGKMVVLLNLQNLYESLYDALNQYYVYLGGQKYVDLGLGTHRVKCRVHTAFRLIVIEEKDVVYKQFPVPLINRLEKHYLDMNTVLQPWQKSIVQELQQWAHEFADVKADQFIARHKYSPADVFIGYHSDACASVVLQAVERQGCRDLTEELYRKVSEEARSILLDCATPDAVVRLSGSSLGSFTAKQLSQEYYYAQQHNSFVDFLQAHLRMTHHECRAVFTEITTFSRLLTGNDCDVLASELRGLASKPVVLSLQQYDTEYSFLKDVRSWLTNPGKRKVLVIQADFDDGTRSAQLVASAKYTAINEINKTQGTKDFVFVYFVTKLSRMGSGTSYVGFHGGLWRSVHIDDLRRSTIMASDVTKLQNVTISQLFKPEDKPEQEEMEIETSQSKELAEEQMEVEDSEEMKKASDPRSCDCSQFLDTTRLVQSCVQGAVGMLRDQNESCARNMRRVTILLDLLNEDNTRNASFLRESKMRLHVLLNKQEENQVRSLKEWVTREAANQDALQEAGTFRHTLWKRVQDVVTPILASMIAHIDRDGNLELLAQPDSPAWVQDLWMFIYSDIKFLNISLVLNNTRSNSEMSFILVQSHMNLLKDAYNAVPFSWRIRDYLEELWVQAQYITDTEGLSKKFVEIFQKTPLGVFLAQFPVAQQQKLLQSYLKDFLLLTMKVSSREELMFLQMALWSCLRELQEASGTPDETYKFPLSLPWVHLAFQHFRTRLQNFSRILTIHPQVLSSLSQAAEKHSLAGCEMTLDAFAAMACAEMLKGDLLKPSPKAWLQLVKNLSTPLELVCSEGYLCDSGSMTRSVIQEVRALWNRIFSIALFVEHVLLGTESHIPELSPLVTTYVSLLDKCLEEDSNLKTCRPFVAVMTTLCDCKDKASKKFSRFGIQPCFICHGDAQDPVCLPCDHVYCLRCIQTWLIPGQMMCPYCLTDLPDKFSPTVSQDHRKAIEKHAQFRHMCNSFFVDLVSTMCFKDNTPPEKSVIDTLLSLLFVQKELLRDASQKHREHTKSLSPFDDVVDQTPVIRSVLLKLLLKYSFHEVKDYIQNYLTQLEKKAFLTEDKTELYLLFISCLEDSVHQKTSAGCRNLEQVLREEGHFLRTYSPGLQGQEPVRIASVEYLQEVARVRLCLDLAADFLSELQEGSELAEDKRRFLKHVEEFCTRVNNDWHRVYLVRKLSSQRGMEFVQSFSKQGHPCQWVFPRKVIAQQKDHVSLMDRYLVHGNEYKAVRDATAKAVLECKTLDIGNALMACRSPKPQQTAYLLLALYTEVAALYRSPNGSLHPEAKQLEAVNKFIKESKILSDPNIRCFARSLVDNTLPLLKIRSANSILKGTVTEMAVHVATILLCGHNQILKPLRNLAFYPVNMANAFLPTMPEDLLVHARTWRGLENVTWYTCPRGHPCSVGECGRPMQESTCLDCGLPVGGLNHTPHEGFSAIRNNEDRTQTGHVLGSPQSSGVAEVSDRGQSPVVFILTRLLTHLAMLVGATHNPQALTVIIKPWVQDPQGFLQQHIQRDLEQLTKMLGRSADETIHVVHLILSSLLRVQSHGVLNFNAELSTKGCRNNWEKHFETLLLRELKHLDKNLPAINALISQDERISSNPVTKIIYGDPATFLPHLPQKSIIHCSKIWSCRRKITVEYLQHIVEQKNGKETVPVLWHFLQKEAELRLVKFLPEILALQRDLVKQFQNVSRVEYSSIRGFIHSHSSDGLRKLLHDRITIFLSTWNALRRSLETNGEIKLPKDYCCSDLDLDAEFEVILPRRQGLGLCGTALVSYLISLHNNMVYTVQKFSNEDNSYSVDISEVADLHVISYEVERDLNPLILSNCQYQVQQGGETSQEFDLEKIQRQISSRFLQGKPRLTLKGIPTLVYRRDWNYEHLFMDIKNKMAQSSLPNLAISTISGQLQSYSDACEALSIIEITLGFLSTAGGDPGMDLNVYIEEVLRMCDQTAQVLKAFSRCQLRHIIALWQFLSAHKSEQRLRLNKELFREIDVQYKEELSTQHQRLLGTFLNEAGLDAFLLELHEMIVLKLKGPRAANSFNPNWSLKDTLVSYMETKDSDILSEVESQFPEEILMSSCISVWKIAATRKWDRQSR.

Over residues 38–48 the composition is skewed to polar residues; the sequence is DNTLVVSSTPE. Positions 38–341 are disordered; it reads DNTLVVSSTP…QAAAPEPTSA (304 aa). Over residues 69-78 the composition is skewed to basic and acidic residues; that stretch reads PGKELEKPEE. Over residues 101-113 the composition is skewed to polar residues; the sequence is GTISSSEAPSSGL. Positions 130–146 are enriched in low complexity; it reads PQNQAQQGGAASQPGHP. Ser-196 is modified (phosphoserine). Basic and acidic residues-rich tracts occupy residues 233–245, 257–267, and 279–289; these read SKGE…KKVP, AGKETGEDVRK, and KHGDQEAELKG. A compositionally biased stretch (low complexity) spans 319 to 335; the sequence is AAAVKTQQAAAPQQAAA. Residue Lys-1128 forms a Glycyl lysine isopeptide (Lys-Gly) (interchain with G-Cter in SUMO2) linkage. Residues 1957-1962, Glu-2060, Ala-2114, Asp-2116, and Arg-2177 each bind ATP; that span reads GVGKSL. Residue Ser-2234 is modified to Phosphoserine. The ATP site is built by Lys-2460 and Ser-2535. Positions 3435 to 3465 form a coiled coil; the sequence is EEMEIETSQSKELAEEQMEVEDSEEMKKASD. Zn(2+) is bound by residues Cys-3947, Cys-3950, Cys-3962, His-3964, Cys-3967, Cys-3970, Cys-3982, Cys-3985, Cys-4451, and His-4455. The RING-type zinc-finger motif lies at 3947 to 3986; it reads CFICHGDAQDPVCLPCDHVYCLRCIQTWLIPGQMMCPYCL. The RZ-type zinc-finger motif lies at 4429 to 4501; it reads MPEDLLVHAR…IRNNEDRTQT (73 aa). The active-site Nucleophile; for E3 ubiquitin-lipopolysaccharide ligase activity is Cys-4462. Residues Cys-4471 and Cys-4474 each coordinate Zn(2+).

It belongs to the AAA ATPase family. Monomer. Interacts with UBE2L3/UBCH7; UBE2L3/UBCH7 is the most efficient ubiquitin-conjugating enzyme E2 for the ubiquitin ligase activity. Interacts with UBE2N/UBC13; promoting 'Lys-63'-linked ubiquitination of target proteins.

The protein localises to the cytoplasm. It localises to the cytosol. Its subcellular location is the lipid droplet. The catalysed reaction is S-ubiquitinyl-[E2 ubiquitin-conjugating enzyme]-L-cysteine + [acceptor protein]-L-lysine = [E2 ubiquitin-conjugating enzyme]-L-cysteine + N(6)-ubiquitinyl-[acceptor protein]-L-lysine.. It catalyses the reaction ATP + H2O = ADP + phosphate + H(+). It participates in protein modification; protein ubiquitination. Functionally, atypical E3 ubiquitin ligase that can catalyze ubiquitination of both proteins and lipids, and which is involved in various processes, such as lipid metabolism, angiogenesis and cell-autonomous immunity. Acts as a key immune sensor by catalyzing ubiquitination of the lipid A moiety of bacterial lipopolysaccharide (LPS) via its RZ-type zinc-finger: restricts the proliferation of cytosolic bacteria, such as Salmonella, by generating the bacterial ubiquitin coat through the ubiquitination of LPS. Also acts indirectly by mediating the recruitment of the LUBAC complex, which conjugates linear polyubiquitin chains. Ubiquitination of LPS triggers cell-autonomous immunity, such as antibacterial autophagy, leading to degradation of the microbial invader. Involved in lipid metabolism by regulating fat storage and lipid droplet formation; act by inhibiting the lipolytic process. Also regulates lipotoxicity by inhibiting desaturation of fatty acids. Also acts as an E3 ubiquitin-protein ligase via its RING-type zinc finger: mediates 'Lys-63'-linked ubiquitination of target proteins. Involved in the non-canonical Wnt signaling pathway in vascular development: acts by mediating ubiquitination and degradation of FLNA and NFATC2 downstream of RSPO3, leading to inhibit the non-canonical Wnt signaling pathway and promoting vessel regression. Also has ATPase activity; ATPase activity is required for ubiquitination of LPS. The sequence is that of E3 ubiquitin-protein ligase RNF213 from Mus musculus (Mouse).